A 195-amino-acid chain; its full sequence is Putative NADH dehydrogenase/NAD(P)H nitroreductase Bcep18194_B1060 (195 aa).

The protein belongs to the nitroreductase family. HadB/RutE subfamily. The cofactor is FMN.

The chain is Putative NADH dehydrogenase/NAD(P)H nitroreductase Bcep18194_B1060 from Burkholderia lata (strain ATCC 17760 / DSM 23089 / LMG 22485 / NCIMB 9086 / R18194 / 383).